The chain runs to 1042 residues: MPSQVLTHEEEYDLAVRQGKGLAQQFFDHAFLNPSAMAVIDGDTNLTYQDLHERAAMLARELQRGNLHTEEPVGVVVQHGISDVVAQMAILYAAGTCVPMDPTLPDLQIKGRLDRLKARYILVDRANQHRDLPFHPLIVDDSSASFSKSSHVRDNEEPMQITLEHRTHIIHTSGTTSEPKAVQIAARSILQVVFHAPFEPLYPTDRVAHVNNSSFDVSLFDIWAPLLRGACIVVVSKVTLLDLETLAAYIDRQGITVMATTTAILNLAASVYPRAFEKLRLCFIGGEAANISAIETIFQAGPPTQLINAYGPTECCIFCLAHRVTIADVQAGVVSIGKPIGRTVAYICDEAGRPVPDGHEGELLIGGAGVSPGYINQPDKNRASFVAIEGSDCQRFYRTGDIVRRRVSNGQIDYVGRRDHQVKVRGFRIELEAVESAIMKTGQFSEAVALKVEAGSEGAGSILVAFAVALSGTKPHAVLSAVDMLKAVLPDYMVPKIELISKMPVNSHAKVDRKYLQQLFRNRWAEQHIDMDNEDSTRGKLANLWASILGVPVPASNDNADFFLLGATSMQASLLISRIQKTFNVQVSLLTLYDNSSLIRLAGILEERILGTQESFCKESERHMWLEDSKLADSLVPPSDPPVDWCRDTEGRVFLTGATGFVGSFLLADLLRQPNVHQVGCLVRAVDPATGLRRLQNGLAKYDLWEDQFRYKLLPLCGTLEDRYLGLGPDRFEEIAHWASVIFHLGARVNYTQPYSLHRPANVQGTVNVLRLACAGRSKVLHYVSSISCFGPTGFITGTRTVMENEPLPRHLEALPYDHGYAQSQWVVENMLQRLMDNGFPIVVYRPGFITGHSQTGACNPDDFLSRLIIACGEMGSYPLLPNQRKEFVPVDYVNAVILHIASSTATAVGRVYHIVPPNRDLSLDMNDSMELVGSLAEGNESSVRGVSYQQWVQELDRQSPERLRPLQPMLTEKLYQGLTRWELYENMPVYDTTNTRQALESYPGGLKFPVLDSELMQKYIRYLQIRSASPKEENPLNGTDS.

The tract at residues histidine 29–arginine 425 is adenylation (A) domain. One can recognise a Carrier domain in the interval aspartate 532 to isoleucine 609. Serine 569 carries the O-(pantetheine 4'-phosphoryl)serine modification. The interval leucine 655–valine 897 is short-chain dehydrogenase/reductase (R) domain.

This sequence belongs to the NRP synthetase family.

The enzyme catalyses L-tyrosinal + AMP + diphosphate + NADP(+) = L-tyrosine + ATP + NADPH + H(+). Its pathway is secondary metabolite biosynthesis. Functionally, non-canonical nonribosomal peptide synthetase; part of the lna gene cluster that mediates the biosynthesis of diastereomeric piperazines. Lna and lnb clusters encode sets of enzymes that produce overlapping sets of previously undescribed metabolites such as piperazinomycin-like metabolites or morpholine. The lna and lnb biosynthetic pathways appear to be part of a signaling network that controls the formation of sclerotia, a resilient overwintering structure. One primary function of the non-canonical nonribosomal peptide synthetases lnaA and lnbA consists in the reduction of L-tyrosine. The presence in the clusters of tailoring enzymes such as the oxidoreductases lnaB, lnbB, lnaE or lnbE, as well as of the cytochrome P450 monooxygenases lnaC, lnaD, or lnbC, might explain formation of various diastereomeric piperazines. The protein is Aldehyde reductase lnaA of Aspergillus flavus (strain ATCC 200026 / FGSC A1120 / IAM 13836 / NRRL 3357 / JCM 12722 / SRRC 167).